Reading from the N-terminus, the 1345-residue chain is CRISPR-associated endonuclease Cas9 (1345 aa).

Residue D10 is the For RuvC-like nuclease domain of the active site. The Mg(2+) site is built by D10, E762, and E766. Residues 770–921 (TNQGRRNSQQ…DKAGFIKRQL (152 aa)) enclose the HNH Cas9-type domain. H840 (proton acceptor for HNH nuclease domain) is an active-site residue. A Mg(2+)-binding site is contributed by H983.

Belongs to the CRISPR-associated protein Cas9 family. Subtype II-A subfamily. Monomer. Binds crRNA and tracrRNA. Mg(2+) is required as a cofactor.

CRISPR (clustered regularly interspaced short palindromic repeat) is an adaptive immune system that provides protection against mobile genetic elements (viruses, transposable elements and conjugative plasmids). CRISPR clusters contain spacers, sequences complementary to antecedent mobile elements, and target invading nucleic acids. CRISPR clusters are transcribed and processed into CRISPR RNA (crRNA). In type II CRISPR systems correct processing of pre-crRNA requires a trans-encoded small RNA (tracrRNA), endogenous ribonuclease 3 (rnc) and this protein. The tracrRNA serves as a guide for ribonuclease 3-aided processing of pre-crRNA. Subsequently Cas9/crRNA/tracrRNA endonucleolytically cleaves linear or circular dsDNA target complementary to the spacer; Cas9 is inactive in the absence of the 2 guide RNAs (gRNA). Cas9 recognizes the protospacer adjacent motif (PAM) in the CRISPR repeat sequences to help distinguish self versus nonself, as targets within the bacterial CRISPR locus do not have PAMs. PAM recognition is also required for catalytic activity. Complements the gRNA coprocessing defect in a cas9 deletion in S.pyogenes strain 370 and cuts target plasmid in Cas9:gRNAs mixing experiments with S.thermophilus CRISPR3 from strain LMD-9. The sequence is that of CRISPR-associated endonuclease Cas9 from Streptococcus mutans serotype c (strain ATCC 700610 / UA159).